Here is a 76-residue protein sequence, read N- to C-terminus: TP53-regulated inhibitor of apoptosis 1 (76 aa).

Position 1 is an N-acetylmethionine (Met-1). Positions 1–52 form a coiled coil; it reads MNSVGEACTDMKREYDQCFNRWFAEKFLKGDSSGDPCTDLFKRYQQCVQKAI. The region spanning 5 to 55 is the CHCH domain; that stretch reads GEACTDMKREYDQCFNRWFAEKFLKGDSSGDPCTDLFKRYQQCVQKAIKEK. 2 short sequence motifs (cx9C motif) span residues 8-18 and 37-47; these read CTDMKREYDQC and CTDLFKRYQQC. Cystine bridges form between Cys-8-Cys-47 and Cys-18-Cys-37.

This sequence belongs to the TRIAP1/MDM35 family. In terms of assembly, monomer. Interacts with APAF1 and HSP70. Forms a complex with PRELID1 in the mitochondrion intermembrane space. Interacts with PRELID3A.

The protein resides in the mitochondrion. Its subcellular location is the mitochondrion intermembrane space. It catalyses the reaction a 1,2-diacyl-sn-glycero-3-phosphate(in) = a 1,2-diacyl-sn-glycero-3-phosphate(out). Involved in the modulation of the mitochondrial apoptotic pathway by ensuring the accumulation of cardiolipin (CL) in mitochondrial membranes. In vitro, the TRIAP1:PRELID1 complex mediates the transfer of phosphatidic acid (PA) between liposomes and probably functions as a PA transporter across the mitochondrion intermembrane space to provide PA for CL synthesis in the inner membrane. Likewise, the TRIAP1:PRELID3A complex mediates the transfer of phosphatidic acid (PA) between liposomes (in vitro) and probably functions as a PA transporter across the mitochondrion intermembrane space (in vivo). Mediates cell survival by inhibiting activation of caspase-9 which prevents induction of apoptosis. The chain is TP53-regulated inhibitor of apoptosis 1 (TRIAP1) from Homo sapiens (Human).